The primary structure comprises 486 residues: Putative protease Do-like 13 (486 aa).

Residues 44–229 (KINTFSSKPN…IPAPVVKHFI (186 aa)) are serine protease. Active-site charge relay system residues include H83, D114, and S192. One can recognise a PDZ domain in the interval 241–334 (FCSLNLSYQH…TILLKILREG (94 aa)).

This sequence belongs to the peptidase S1C family.

Putative serine protease. This chain is Putative protease Do-like 13 (DEGP13), found in Arabidopsis thaliana (Mouse-ear cress).